The sequence spans 284 residues: MDAIKKKMVAMKMEKKNALDRAEQLEQKLRETEEAKAKIEDDYNSLVKKNIQTENDYDNCNTQLQDVQAKYERAEKQIQEHEQEIQSLTRKISLLEEGIMKAEERFTTASGKLEEASKAADESERNRKVLENLNSGNDERIDQLEKQLTEAKWIAEEADKKYEEAARKLAITEVDLERAEARLEAAEAKVIDLEEQLTVVGANIKTLQVQNDQASQREDSYEETIRDLTNRLKDAENRATEAERTVSKLQKEVDRLEDELLTEKEKYKAISDELDATFAELAGY.

The stretch at 1–273 (MDAIKKKMVA…KEKYKAISDE (273 aa)) forms a coiled coil. Residues 110–130 (SGKLEEASKAADESERNRKVL) show a composition bias toward basic and acidic residues. The disordered stretch occupies residues 110–134 (SGKLEEASKAADESERNRKVLENLN).

It belongs to the tropomyosin family. In terms of assembly, homodimer.

Functionally, tropomyosin, in association with the troponin complex, plays a central role in the calcium dependent regulation of muscle contraction. The chain is Tropomyosin from Perna viridis (Asian green mussel).